The sequence spans 371 residues: MSMSPKHTTPFSVSDILSPLEESYKKVGMEGGGLGAPLAAYRQGQAAPPTAAMQQHAVGHHGAVTAAYHMTAAGVPQLSHSAVGGYCNGNLGNMSELPPYQDTMRNSASGPGWYGANPDPRFPAISRFMGPASGMNMSGMGGLGSLGDVSKNMAPLPSAPRRKRRVLFSQAQVYELERRFKQQKYLSAPEREHLASMIHLTPTQVKIWFQNHRYKMKRQAKDKAAQQQLQQDSGGGGGGGGTGCPQQQQAQQQSPRRVAVPVLVKDGKPCQAGAPAPGAASLQGHAQQQAQHQAQAAQAAAAAISVGSGGAGLGAHPGHQPGSAGQSPDLAHHAASPAALQGQVSSLSHLNSSGSDYGTMSCSTLLYGRTW.

The segment at residues 161-220 is a DNA-binding region (homeobox); it reads RRKRRVLFSQAQVYELERRFKQQKYLSAPEREHLASMIHLTPTQVKIWFQNHRYKMKRQA. 2 disordered regions span residues 219–294 and 310–339; these read QAKD…QHQA and GAGL…SPAA. Residues 233–243 show a composition bias toward gly residues; the sequence is SGGGGGGGGTG. The segment covering 244–253 has biased composition (low complexity); that stretch reads CPQQQQAQQQ. The residue at position 254 (Ser254) is a Phosphoserine. The segment covering 272–294 has biased composition (low complexity); that stretch reads AGAPAPGAASLQGHAQQQAQHQA.

Belongs to the NK-2 homeobox family. In terms of assembly, interacts with WWTR1. Phosphorylated on serine residues by STK3/MST2. In terms of tissue distribution, thyroid and lung.

The protein localises to the nucleus. Functionally, transcription factor that binds and activates the promoter of thyroid specific genes such as thyroglobulin, thyroperoxidase, and thyrotropin receptor. Crucial in the maintenance of the thyroid differentiation phenotype. May play a role in lung development and surfactant homeostasis. Forms a regulatory loop with GRHL2 that coordinates lung epithelial cell morphogenesis and differentiation. Activates the transcription of GNRHR and plays a role in enhancing the circadian oscillation of its gene expression. Represses the transcription of the circadian transcriptional repressor NR1D1. In Homo sapiens (Human), this protein is Homeobox protein Nkx-2.1.